The sequence spans 244 residues: Small ribosomal subunit protein uS2 (244 aa).

It belongs to the universal ribosomal protein uS2 family.

The protein is Small ribosomal subunit protein uS2 of Halalkalibacterium halodurans (strain ATCC BAA-125 / DSM 18197 / FERM 7344 / JCM 9153 / C-125) (Bacillus halodurans).